Here is a 158-residue protein sequence, read N- to C-terminus: Protein SREK1IP1 (158 aa).

Disordered stretches follow at residues 1-20 (MAAP…RCGY) and 45-158 (SSTS…SDTD). The segment at 13-30 (AGCKRCGYPGHLTFECRN) adopts a CCHC-type zinc-finger fold. The segment covering 59 to 79 (ALSKEKIFGSHSKGSQEDSRK) has biased composition (basic and acidic residues). 2 stretches are compositionally biased toward basic residues: residues 80–98 (EKHK…KKRS) and 111–140 (KKKK…KQKK). Low complexity predominate over residues 145 to 158 (SSSSDSSSESSDTD).

Functionally, possible splicing regulator involved in the control of cellular survival. In Danio rerio (Zebrafish), this protein is Protein SREK1IP1 (srek1ip1).